The sequence spans 446 residues: C-type lectin domain family 18 member C (446 aa).

Residues 1 to 26 (MLHPETSPGRGHLLAVLLALLGTAWA) form the signal peptide. Residues 52–182 (LSLHNRLRSW…AAIEAFVCAY (131 aa)) enclose the SCP domain. N-linked (GlcNAc...) asparagine glycosylation is present at Asn144. Positions 228 to 261 (PRNPCRMSCQNHGRLNISTCHCHCPPGYTGRYCQ) constitute an EGF-like domain. Disulfide bonds link Cys236-Cys249, Cys251-Cys260, Cys327-Cys432, and Cys408-Cys424. The region spanning 306-433 (IDGDCFMVSS…CKTRNRYICQ (128 aa)) is the C-type lectin domain.

Detected in peripheral blood cells.

Its subcellular location is the secreted. The protein resides in the endoplasmic reticulum. It is found in the golgi apparatus. It localises to the endosome. In terms of biological role, binds polysaccharidesin a Ca(2+)-independent manner with a preferentially binding to fucoidan, beta-glucans and galactans. The polypeptide is C-type lectin domain family 18 member C (CLEC18C) (Homo sapiens (Human)).